Consider the following 546-residue polypeptide: Probable Xaa-Pro aminopeptidase pepP (546 aa).

D341, D352, E475, and E515 together coordinate Mn(2+).

Belongs to the peptidase M24B family. The cofactor is Mn(2+).

It carries out the reaction Release of any N-terminal amino acid, including proline, that is linked to proline, even from a dipeptide or tripeptide.. Catalyzes the removal of a penultimate prolyl residue from the N-termini of peptides. The polypeptide is Probable Xaa-Pro aminopeptidase pepP (pepP) (Sclerotinia sclerotiorum (strain ATCC 18683 / 1980 / Ss-1) (White mold)).